A 353-amino-acid polypeptide reads, in one-letter code: Photosystem II protein D1 (353 aa).

N-acetylthreonine is present on T2. T2 is subject to Phosphothreonine. A run of 3 helical transmembrane segments spans residues 29-46 (YIGW…TATS), 118-133 (HFLL…EWEL), and 142-156 (WIAV…AATA). H118 provides a ligand contact to chlorophyll a. Y126 provides a ligand contact to pheophytin a. Residues D170 and E189 each coordinate [CaMn4O5] cluster. A helical transmembrane segment spans residues 197–218 (FHMLGVAGVFGGSLFSAMHGSL). Chlorophyll a is bound at residue H198. A quinone is bound by residues H215 and 264–265 (SF). H215 lines the Fe cation pocket. Fe cation is bound at residue H272. Residues 274–288 (FLAAWPVVGIWFTAL) traverse the membrane as a helical segment. Residues H332, E333, D342, and A344 each contribute to the [CaMn4O5] cluster site. The propeptide occupies 345–353 (AVEAPSTNG).

It belongs to the reaction center PufL/M/PsbA/D family. In terms of assembly, PSII is composed of 1 copy each of membrane proteins PsbA, PsbB, PsbC, PsbD, PsbE, PsbF, PsbH, PsbI, PsbJ, PsbK, PsbL, PsbM, PsbT, PsbX, PsbY, PsbZ, Psb30/Ycf12, at least 3 peripheral proteins of the oxygen-evolving complex and a large number of cofactors. It forms dimeric complexes. The cofactor is The D1/D2 heterodimer binds P680, chlorophylls that are the primary electron donor of PSII, and subsequent electron acceptors. It shares a non-heme iron and each subunit binds pheophytin, quinone, additional chlorophylls, carotenoids and lipids. D1 provides most of the ligands for the Mn4-Ca-O5 cluster of the oxygen-evolving complex (OEC). There is also a Cl(-1) ion associated with D1 and D2, which is required for oxygen evolution. The PSII complex binds additional chlorophylls, carotenoids and specific lipids.. Tyr-161 forms a radical intermediate that is referred to as redox-active TyrZ, YZ or Y-Z. In terms of processing, C-terminally processed by CTPA; processing is essential to allow assembly of the oxygen-evolving complex and thus photosynthetic growth.

Its subcellular location is the plastid. The protein localises to the chloroplast thylakoid membrane. It carries out the reaction 2 a plastoquinone + 4 hnu + 2 H2O = 2 a plastoquinol + O2. Photosystem II (PSII) is a light-driven water:plastoquinone oxidoreductase that uses light energy to abstract electrons from H(2)O, generating O(2) and a proton gradient subsequently used for ATP formation. It consists of a core antenna complex that captures photons, and an electron transfer chain that converts photonic excitation into a charge separation. The D1/D2 (PsbA/PsbD) reaction center heterodimer binds P680, the primary electron donor of PSII as well as several subsequent electron acceptors. This is Photosystem II protein D1 from Ceratophyllum demersum (Rigid hornwort).